Consider the following 520-residue polypeptide: Ribonuclease Y (520 aa).

Residues 1–21 form a helical membrane-spanning segment; the sequence is MEILIIVIAAVVGLALGFAIA. Residues 210–295 form the KH domain; sequence CVSVFNLESD…EVVKKTRKQI (86 aa). In terms of domain architecture, HD spans 336–429; the sequence is LLQHSREVAK…VQVCDAISGA (94 aa).

This sequence belongs to the RNase Y family.

Its subcellular location is the cell membrane. Endoribonuclease that initiates mRNA decay. This chain is Ribonuclease Y, found in Christiangramia forsetii (strain DSM 17595 / CGMCC 1.15422 / KT0803) (Gramella forsetii).